Consider the following 143-residue polypeptide: Interleukin-3 (143 aa).

The N-terminal stretch at 1–19 is a signal peptide; it reads MSRLPVLLLLHLLVSPGLQ. A disulfide bridge connects residues cysteine 35 and cysteine 103. N-linked (GlcNAc...) asparagine glycosylation occurs at asparagine 89.

Belongs to the IL-3 family. Monomer. In terms of tissue distribution, activated T-cells, mast cells, natural killer cells.

The protein localises to the secreted. In terms of biological role, granulocyte/macrophage colony-stimulating factors are cytokines that act in hematopoiesis by controlling the production, differentiation, and function of 2 related white cell populations of the blood, the granulocytes and the monocytes-macrophages. This CSF induces granulocytes, macrophages, mast cells, stem cells, erythroid cells, eosinophils and megakaryocytes. This is Interleukin-3 (IL3) from Macaca mulatta (Rhesus macaque).